Consider the following 341-residue polypeptide: Ribonucleoside-diphosphate reductase small chain A (341 aa).

The segment at 1-20 (MGSLKEGQGRDMEEGESEEP) is disordered. Residues Asp-87, Glu-118, and His-121 each contribute to the Fe cation site. Tyr-125 is a catalytic residue. Fe cation-binding residues include Glu-180, Glu-214, and His-217.

The protein belongs to the ribonucleoside diphosphate reductase small chain family. In terms of assembly, homodimer and heterodimer with TSO2. Heterotetramer of two R1 and two R2 chains. A radical transfer pathway may occur between Tyr-125 of protein R2 and R1. Homodimer contains a dinuclear non-heme iron center and a stable tyrosyl radical essential for activity. A transfer pathway may occur between Tyr-125 of protein R2 and R1. Interacts with CSN7. Fe cation serves as cofactor. In terms of tissue distribution, expressed in rosette leaves, cauline leaves, stems and flowers.

Its subcellular location is the cytoplasm. It carries out the reaction a 2'-deoxyribonucleoside 5'-diphosphate + [thioredoxin]-disulfide + H2O = a ribonucleoside 5'-diphosphate + [thioredoxin]-dithiol. Inhibited by phenol, paracetamol, 2,4,6-trimethylphenol, resveratrol, furfuryl mercaptan, 2-thiophenthiol, phenylhydrazine, and hydroxyurea. Its function is as follows. Provides the precursors necessary for DNA synthesis. Catalyzes the biosynthesis of deoxyribonucleotides from the corresponding ribonucleotides. This Arabidopsis thaliana (Mouse-ear cress) protein is Ribonucleoside-diphosphate reductase small chain A (RNR2A).